Reading from the N-terminus, the 189-residue chain is UPF0398 protein lp_1753 (189 aa).

Belongs to the UPF0398 family.

This Lactiplantibacillus plantarum (strain ATCC BAA-793 / NCIMB 8826 / WCFS1) (Lactobacillus plantarum) protein is UPF0398 protein lp_1753.